We begin with the raw amino-acid sequence, 300 residues long: Transmembrane protein 158 (300 aa).

The N-terminal stretch at Met-1–Gly-20 is a signal peptide. A glycan (N-linked (GlcNAc...) asparagine) is linked at Asn-75. 2 helical membrane passes run Leu-231–Phe-251 and Val-273–Val-293.

The protein belongs to the TMEM158 family. Post-translationally, N-glycosylated.

The protein resides in the membrane. Its function is as follows. Receptor for brain injury-derived neurotrophic peptide (BINP), a synthetic 13-mer peptide. This Homo sapiens (Human) protein is Transmembrane protein 158 (TMEM158).